The sequence spans 260 residues: Phosphate import ATP-binding protein PstB (260 aa).

The region spanning 14–255 (IETENLNLFY…PKNTKTEEYI (242 aa)) is the ABC transporter domain. 46–53 (GPSGCGKS) contributes to the ATP binding site.

This sequence belongs to the ABC transporter superfamily. Phosphate importer (TC 3.A.1.7) family. In terms of assembly, the complex is composed of two ATP-binding proteins (PstB), two transmembrane proteins (PstC and PstA) and a solute-binding protein (PstS).

It is found in the cell inner membrane. It carries out the reaction phosphate(out) + ATP + H2O = ADP + 2 phosphate(in) + H(+). Part of the ABC transporter complex PstSACB involved in phosphate import. Responsible for energy coupling to the transport system. The protein is Phosphate import ATP-binding protein PstB of Borreliella burgdorferi (strain ATCC 35210 / DSM 4680 / CIP 102532 / B31) (Borrelia burgdorferi).